The chain runs to 126 residues: MAPKAEKKPSEKAPKADKKITKEGGSERKKKTKKSTETYKIYLFKVLKQVHPDIGISGKAMGIMNSFINDTFEKIALESSRLARYNKKPTITSREIQTAVRLVLPGELAKHAVSEGTKAVTKFTSS.

The span at 1–27 (MAPKAEKKPSEKAPKADKKITKEGGSE) shows a compositional bias: basic and acidic residues. A disordered region spans residues 1–34 (MAPKAEKKPSEKAPKADKKITKEGGSERKKKTKK). At A2 the chain carries N,N,N-trimethylalanine; alternate. Residue A2 is modified to N,N-dimethylalanine; alternate. A2 bears the N-methylalanine; alternate mark. K4 is subject to N6-methyllysine. An N6-acetyllysine mark is found at K7, K12, K18, and K19. K122 is covalently cross-linked (Glycyl lysine isopeptide (Lys-Gly) (interchain with G-Cter in ubiquitin)).

The protein belongs to the histone H2B family. As to quaternary structure, the nucleosome is a histone octamer containing two molecules each of H2A, H2B, H3 and H4 assembled in one H3-H4 heterotetramer and two H2A-H2B heterodimers. The octamer wraps approximately 147 bp of DNA. In terms of processing, can be acetylated to form H2BK6ac, H2BK33ac and H2BK34ac. Monoubiquitinated by BRE1 to form H2BK143ub1 and deubiquitinated by UBP26. Required for heterochromatic histone H3 di- and trimethylation at H3K4me. May give a specific tag for epigenetic transcriptional activation.

The protein resides in the nucleus. It localises to the chromosome. Its function is as follows. Core component of nucleosome. Nucleosomes wrap and compact DNA into chromatin, limiting DNA accessibility to the cellular machineries which require DNA as a template. Histones thereby play a central role in transcription regulation, DNA repair, DNA replication and chromosomal stability. DNA accessibility is regulated via a complex set of post-translational modifications of histones, also called histone code, and nucleosome remodeling. In Arabidopsis thaliana (Mouse-ear cress), this protein is Histone H2B.5.